A 226-amino-acid chain; its full sequence is Glycerol-3-phosphate acyltransferase (226 aa).

6 helical membrane passes run 1–21 (MGLWLSLCGAVVVVAYLLGSF), 56–76 (GPGAFVLGLDCLKGVLAIALV), 102–122 (LVTLAGIAAILGHSKSIFLGF), 134–154 (ILLAMNWQVGLATFGVFAVVV), 159–178 (IVSLSSIMGAIAVSIVMVVL), and 182–197 (LPYILFGIAGGLYVIL).

The protein belongs to the PlsY family. Probably interacts with PlsX.

It is found in the cell inner membrane. It carries out the reaction an acyl phosphate + sn-glycerol 3-phosphate = a 1-acyl-sn-glycero-3-phosphate + phosphate. It functions in the pathway lipid metabolism; phospholipid metabolism. In terms of biological role, catalyzes the transfer of an acyl group from acyl-phosphate (acyl-PO(4)) to glycerol-3-phosphate (G3P) to form lysophosphatidic acid (LPA). This enzyme utilizes acyl-phosphate as fatty acyl donor, but not acyl-CoA or acyl-ACP. The chain is Glycerol-3-phosphate acyltransferase from Trichormus variabilis (strain ATCC 29413 / PCC 7937) (Anabaena variabilis).